A 109-amino-acid polypeptide reads, in one-letter code: Phosphocarrier protein HPr (109 aa).

Positions 22 to 109 (ELSAVFTIRN…EVFNSGFGEL (88 aa)) constitute an HPr domain. The Pros-phosphohistidine intermediate role is filled by histidine 36.

Belongs to the HPr family.

The protein resides in the cytoplasm. Its function is as follows. General (non sugar-specific) component of the phosphoenolpyruvate-dependent sugar phosphotransferase system (sugar PTS). This major carbohydrate active-transport system catalyzes the phosphorylation of incoming sugar substrates concomitantly with their translocation across the cell membrane. The phosphoryl group from phosphoenolpyruvate (PEP) is transferred to the phosphoryl carrier protein HPr by enzyme I. Phospho-HPr then transfers it to the PTS EIIA domain. In Chlamydia trachomatis serovar D (strain ATCC VR-885 / DSM 19411 / UW-3/Cx), this protein is Phosphocarrier protein HPr (ptsH).